The sequence spans 299 residues: Putative adenosine/adenine deaminase (299 aa).

Residues His-16 and His-18 each coordinate Zn(2+). His-18 and Gly-157 together coordinate substrate. His-184 provides a ligand contact to Zn(2+). Catalysis depends on Glu-187, which acts as the Proton donor. Asp-265 provides a ligand contact to Zn(2+). Residue Asp-266 participates in substrate binding.

Belongs to the metallo-dependent hydrolases superfamily. Adenosine and AMP deaminases family. Zn(2+) serves as cofactor.

Functionally, putative nucleoside deaminase. May catalyze the hydrolytic deamination of adenosine or some similar substrate and play a role in purine metabolism. The protein is Putative adenosine/adenine deaminase of Treponema pallidum (strain Nichols).